The chain runs to 374 residues: RNA binding protein fox-1 homolog 3 (374 aa).

The span at 1 to 29 (MAQPYPPAQYPPPPQNGIPAEYAPPPPHP) shows a compositional bias: pro residues. A disordered region spans residues 1-105 (MAQPYPPAQY…QQPKRLHVSN (105 aa)). The span at 49 to 74 (TPAQTHPEQPGTEASTQPIAGTQTVP) shows a compositional bias: polar residues. In terms of domain architecture, RRM spans 99–175 (KRLHVSNIPF…RKIEVNNATA (77 aa)). At Arg-223 the chain carries Asymmetric dimethylarginine; alternate. Omega-N-methylarginine; alternate is present on Arg-223. At Arg-319 the chain carries Asymmetric dimethylarginine.

Phosphorylated. In terms of tissue distribution, widely expressed in brain, including in cerebral cortex, hippocampus, thalamus, caudate/putamen, cerebellum, as well as in the spinal cord (at protein level). Not expressed in all neuronal cells within a region, in cerebellum, expression is absent in Purkinje cells (at protein level). Expressed in the retina in the ganglion cells and some cells in the inner nuclear layer, but absent from the photoreceptor cells and most cells in the inner nuclear layer (at protein level).

The protein resides in the nucleus. It is found in the cytoplasm. Functionally, pre-mRNA alternative splicing regulator. Regulates alternative splicing of RBFOX2 to enhance the production of mRNA species that are targeted for nonsense-mediated decay (NMD). The sequence is that of RNA binding protein fox-1 homolog 3 (Rbfox3) from Mus musculus (Mouse).